The sequence spans 73 residues: Putative defensin-like protein 42 (73 aa).

4 cysteine pairs are disulfide-bonded: C6–C58, C18–C41, C27–C50, and C31–C52.

It belongs to the DEFL family.

The polypeptide is Putative defensin-like protein 42 (Arabidopsis thaliana (Mouse-ear cress)).